A 499-amino-acid chain; its full sequence is Rhamnogalacturonate lyase A (499 aa).

The first 20 residues, 1–20, serve as a signal peptide directing secretion; the sequence is MLSKTSLLSLLSLAAGVVNA. 2 disulfides stabilise this stretch: Cys49–Cys92 and Cys183–Cys192.

The protein belongs to the polysaccharide lyase 4 family.

Its subcellular location is the secreted. It catalyses the reaction Endotype eliminative cleavage of L-alpha-rhamnopyranosyl-(1-&gt;4)-alpha-D-galactopyranosyluronic acid bonds of rhamnogalacturonan I domains in ramified hairy regions of pectin leaving L-rhamnopyranose at the reducing end and 4-deoxy-4,5-unsaturated D-galactopyranosyluronic acid at the non-reducing end.. Functionally, pectinolytic enzymes consist of four classes of enzymes: pectin lyase, polygalacturonase, pectin methylesterase and rhamnogalacturonase. Degrades the rhamnogalacturonan I (RG-I) backbone of pectin. The sequence is that of Rhamnogalacturonate lyase A (rglA) from Aspergillus niger.